The primary structure comprises 75 residues: Tautomerase PptA (75 aa).

Proline 2 acts as the Proton acceptor; via imino nitrogen in catalysis.

This sequence belongs to the 4-oxalocrotonate tautomerase family. PptA subfamily. As to quaternary structure, homodimer.

The protein localises to the cytoplasm. In Shigella sonnei (strain Ss046), this protein is Tautomerase PptA.